Here is a 595-residue protein sequence, read N- to C-terminus: ATP-dependent lipid A-core flippase (595 aa).

The segment at 1 to 20 is disordered; sequence MSQAYQPDSTKTSAKKSSAV. Residues 9-19 are compositionally biased toward low complexity; that stretch reads STKTSAKKSSA. The next 4 membrane-spanning stretches (helical) occupy residues 41–61, 81–101, 169–189, and 266–286; these read WWAILLTITGFAINAGTEIWI, GLFPFIIVMLFFVRGVGSFLG, VIALMGFLLYSNWRLTLILFV, and INTPAVQLLMAVAMAVVVWLA. One can recognise an ABC transmembrane type-1 domain in the interval 45–326; it reads LLTITGFAIN…LTDVNQQLQR (282 aa). Residues 357 to 592 form the ABC transporter domain; it reads IKLDNISLVY…HGHYAQMYAR (236 aa). An ATP-binding site is contributed by 390–397; it reads GRSGAGKS.

It belongs to the ABC transporter superfamily. Lipid exporter (TC 3.A.1.106) family. As to quaternary structure, homodimer.

The protein localises to the cell inner membrane. The enzyme catalyses ATP + H2O + lipid A-core oligosaccharideSide 1 = ADP + phosphate + lipid A-core oligosaccharideSide 2.. In terms of biological role, involved in lipopolysaccharide (LPS) biosynthesis. Translocates lipid A-core from the inner to the outer leaflet of the inner membrane. Transmembrane domains (TMD) form a pore in the inner membrane and the ATP-binding domain (NBD) is responsible for energy generation. In Psychrobacter arcticus (strain DSM 17307 / VKM B-2377 / 273-4), this protein is ATP-dependent lipid A-core flippase.